The chain runs to 911 residues: MSRFFANGSDSESESSEEEVQAPNFNKASAFQFSDDEEEVKRVVRSTKEKRYENLTSIIKTIRNHKKIKDIPNTLSSFEDLTRAYTKALPVISKEENGITPRFYIRCLAELEDFINEIWEDREGRRNLSKNNTKSLGTLRQKVRKYIKDFEEDLSRFREAPDQESEAEDEEAHVSDAGEAADDSYAGFKKEASVTAPKIAKSAPAKSVPADDEDSDDSIDWDSDSESETESSEDENQYQNMRERFLKRSTEKGEDKGDDDKRKDKRKEQKLKIRKRAEDDEDGEWETVVKGHVVEKPKMFEKDAEIDIPLVLAKLVEIMSARGKKRTDRRLQIDLLFELRDISDQHNLGVPVSVKIHFNIISAIFDYNQKISEPMKMEHWALLLEVMQSMMKLLLANADISISESVAEEHEEYITAPYYIRGCPLAAVERLDDEFTKLLKECDPHSNDYVSRLKDEMNVVKTIELVLQYFEQCGNPNERCRIYLRKIEHLYYKFDPEVLKKKRGELPATTATSVDVMDKLCKFIYAKDDTDRIRTRAILAHIYHHAMHDNWFQARDLVLMSHLQDNIDAADPATRILYNRMMANLGLCAFRQENVKDAHHCLVDLMVTGKPKELLAQGLLPQRQHERSAEQEKIEKQRQMPFHMHINLELLECVYLVSAMLLEIPYIAAHEFDARRRMISKTFYQQLRSSERQSLVGPPESMREHVVAAAKAMRCGNWQACANFIVNKKMNTKVWDLFYESDRVREMLVKFIKEESLRTYLFTYSNVYTSISIPSLAQMYELPVPKVHSIISKMIINEELMASLDDPSETVVMHRSEPSRLQALAMQFVDKVTNLVDVNEKVFDMKQGNFFQRGNMGNRGDRGYNRNQNNQGGNWGGQRRDNRNQRNRNQRGHHKNQQQQQQQQVQTIDEE.

Disordered regions lie at residues Met-1 to Glu-38 and Ser-155 to Ala-181. Positions Ser-11 to Val-20 are enriched in acidic residues. Positions Pro-23–Gln-32 are enriched in polar residues. 4 positions are modified to phosphoserine: Ser-34, Ser-165, Ser-175, and Ser-184. Residues Asp-162–Glu-171 show a composition bias toward acidic residues. Over residues Ala-196–Val-208 the composition is skewed to low complexity. A disordered region spans residues Ala-196–Glu-284. The span at Ala-210–Asn-236 shows a compositional bias: acidic residues. Basic and acidic residues predominate over residues Met-241 to Leu-271. A PCI domain is found at Phe-642–Pro-818. The segment at Phe-851–Glu-911 is disordered. Positions Gln-885–Asn-896 are enriched in basic residues. Low complexity predominate over residues Gln-897–Glu-911.

It belongs to the eIF-3 subunit C family. In terms of assembly, component of the eukaryotic translation initiation factor 3 (eIF-3) complex. The eIF-3 complex interacts with pix.

The protein localises to the cytoplasm. Its function is as follows. Component of the eukaryotic translation initiation factor 3 (eIF-3) complex, which is involved in protein synthesis of a specialized repertoire of mRNAs and, together with other initiation factors, stimulates binding of mRNA and methionyl-tRNAi to the 40S ribosome. The eIF-3 complex specifically targets and initiates translation of a subset of mRNAs involved in cell proliferation. In Drosophila pseudoobscura pseudoobscura (Fruit fly), this protein is Eukaryotic translation initiation factor 3 subunit C.